Consider the following 424-residue polypeptide: Light-independent protochlorophyllide reductase subunit N (424 aa).

Cys-26, Cys-51, and Cys-112 together coordinate [4Fe-4S] cluster.

This sequence belongs to the BchN/ChlN family. Protochlorophyllide reductase is composed of three subunits; BchL, BchN and BchB. Forms a heterotetramer of two BchB and two BchN subunits. The cofactor is [4Fe-4S] cluster.

It carries out the reaction chlorophyllide a + oxidized 2[4Fe-4S]-[ferredoxin] + 2 ADP + 2 phosphate = protochlorophyllide a + reduced 2[4Fe-4S]-[ferredoxin] + 2 ATP + 2 H2O. Its pathway is porphyrin-containing compound metabolism; bacteriochlorophyll biosynthesis (light-independent). In terms of biological role, component of the dark-operative protochlorophyllide reductase (DPOR) that uses Mg-ATP and reduced ferredoxin to reduce ring D of protochlorophyllide (Pchlide) to form chlorophyllide a (Chlide). This reaction is light-independent. The NB-protein (BchN-BchB) is the catalytic component of the complex. This chain is Light-independent protochlorophyllide reductase subunit N, found in Rhodobacter capsulatus (strain ATCC BAA-309 / NBRC 16581 / SB1003).